The primary structure comprises 500 residues: Catalase (500 aa).

Active-site residues include histidine 59 and asparagine 131. Position 339 (tyrosine 339) interacts with heme.

This sequence belongs to the catalase family. Heme is required as a cofactor.

It catalyses the reaction 2 H2O2 = O2 + 2 H2O. Functionally, decomposes hydrogen peroxide into water and oxygen; serves to protect cells from the toxic effects of hydrogen peroxide. The protein is Catalase (katA) of Neisseria gonorrhoeae.